A 338-amino-acid polypeptide reads, in one-letter code: uncharacterized protein (338 aa).

The next 3 membrane-spanning stretches (helical) occupy residues 11 to 31 (ILSL…TFAI), 249 to 269 (IAVF…IIPA), and 318 to 338 (VPTP…GLGL).

It localises to the cell membrane. This is an uncharacterized protein from Methanocaldococcus jannaschii (strain ATCC 43067 / DSM 2661 / JAL-1 / JCM 10045 / NBRC 100440) (Methanococcus jannaschii).